A 459-amino-acid polypeptide reads, in one-letter code: UDP-N-acetylmuramate--L-alanine ligase (459 aa).

113-119 serves as a coordination point for ATP; that stretch reads GSHGKTT.

This sequence belongs to the MurCDEF family.

Its subcellular location is the cytoplasm. It carries out the reaction UDP-N-acetyl-alpha-D-muramate + L-alanine + ATP = UDP-N-acetyl-alpha-D-muramoyl-L-alanine + ADP + phosphate + H(+). Its pathway is cell wall biogenesis; peptidoglycan biosynthesis. Cell wall formation. The protein is UDP-N-acetylmuramate--L-alanine ligase of Persephonella marina (strain DSM 14350 / EX-H1).